A 379-amino-acid chain; its full sequence is Probable peptidoglycan glycosyltransferase FtsW (379 aa).

Residues 1 to 15 (MHKTEAQTYLLYDRT) are Cytoplasmic-facing. The chain crosses the membrane as a helical span at residues 16–36 (LLLLTMGLVGIGLVMVISTSM). The Periplasmic segment spans residues 37 to 52 (PIGVRLSEDPFYFARR). A helical membrane pass occupies residues 53–73 (YAFYLGLAVVLSLVTLGIPMA). Residues 74-79 (SWQRGS) lie on the Cytoplasmic side of the membrane. A helical membrane pass occupies residues 80–100 (SLILLITLIMLLLVLIAGQSV). At 101–113 (NGAVRWLALGPWR) the chain is on the periplasmic side. Residues 114–133 (IQPAELSKLALFCYLASYLV) traverse the membrane as a helical segment. Residues 134–139 (RKAEEV) lie on the Cytoplasmic side of the membrane. A helical membrane pass occupies residues 140 to 162 (RTNFWGFCKPIGVMVLLAILLLA). At 163–165 (QPD) the chain is on the periplasmic side. A helical membrane pass occupies residues 166–183 (LGTVLVLFITTLAMLFLA). The Cytoplasmic segment spans residues 184-186 (EAK). A helical membrane pass occupies residues 187–207 (IWQFLPIIGTGILAVMLLIIA). Over 208–269 (KPYRRRRVTS…TEAHTDFICS (62 aa)) the chain is Periplasmic. A helical membrane pass occupies residues 270 to 290 (ILGEELGYFGVLLALLMVFLV). At 291 to 301 (AFRAMSIGRKA) the chain is on the cytoplasmic side. Residues 302–322 (LAINQIFSGFLACSIGIWFSF) form a helical membrane-spanning segment. Over 323 to 342 (QTMVNVGAAAGMLPTKGLTL) the chain is Periplasmic. A helical transmembrane segment spans residues 343–363 (PFISYGGSSMLIMLTAIVLLI). At 364–379 (RIDFETRLAKLQAFVR) the chain is on the cytoplasmic side.

The protein belongs to the SEDS family. FtsW subfamily.

The protein localises to the cell inner membrane. The enzyme catalyses [GlcNAc-(1-&gt;4)-Mur2Ac(oyl-L-Ala-gamma-D-Glu-L-Lys-D-Ala-D-Ala)](n)-di-trans,octa-cis-undecaprenyl diphosphate + beta-D-GlcNAc-(1-&gt;4)-Mur2Ac(oyl-L-Ala-gamma-D-Glu-L-Lys-D-Ala-D-Ala)-di-trans,octa-cis-undecaprenyl diphosphate = [GlcNAc-(1-&gt;4)-Mur2Ac(oyl-L-Ala-gamma-D-Glu-L-Lys-D-Ala-D-Ala)](n+1)-di-trans,octa-cis-undecaprenyl diphosphate + di-trans,octa-cis-undecaprenyl diphosphate + H(+). It functions in the pathway cell wall biogenesis; peptidoglycan biosynthesis. In terms of biological role, peptidoglycan polymerase that is essential for cell division. The chain is Probable peptidoglycan glycosyltransferase FtsW from Moranella endobia (strain PCIT).